The following is a 257-amino-acid chain: UPF0246 protein Ent638_0568 (257 aa).

It belongs to the UPF0246 family.

This is UPF0246 protein Ent638_0568 from Enterobacter sp. (strain 638).